We begin with the raw amino-acid sequence, 33 residues long: Photosystem II reaction center protein Psb30 (33 aa).

The helical transmembrane segment at 5–25 (LIVQLTSLILISIAGPIIIAL) threads the bilayer.

This sequence belongs to the Psb30/Ycf12 family. PSII is composed of 1 copy each of membrane proteins PsbA, PsbB, PsbC, PsbD, PsbE, PsbF, PsbH, PsbI, PsbJ, PsbK, PsbL, PsbM, PsbT, PsbY, PsbZ, Psb30/Ycf12, peripheral proteins of the oxygen-evolving complex and a large number of cofactors. It forms dimeric complexes.

It localises to the plastid. Its subcellular location is the chloroplast thylakoid membrane. Its function is as follows. A core subunit of photosystem II (PSII), probably helps stabilize the reaction center. The polypeptide is Photosystem II reaction center protein Psb30 (Euglena myxocylindracea).